Consider the following 249-residue polypeptide: Proteasome subunit alpha type-3 (249 aa).

It belongs to the peptidase T1A family. The 26S proteasome consists of a 20S proteasome core and two 19S regulatory subunits. The 20S proteasome core is composed of 28 subunits that are arranged in four stacked rings, resulting in a barrel-shaped structure. The two end rings are each formed by seven alpha subunits, and the two central rings are each formed by seven beta subunits. The catalytic chamber with the active sites is on the inside of the barrel.

Its subcellular location is the cytoplasm. It is found in the nucleus. In terms of biological role, the proteasome is a multicatalytic proteinase complex which is characterized by its ability to cleave peptides with Arg, Phe, Tyr, Leu, and Glu adjacent to the leaving group at neutral or slightly basic pH. The proteasome has an ATP-dependent proteolytic activity. The protein is Proteasome subunit alpha type-3 (PAG1) of Spinacia oleracea (Spinach).